Reading from the N-terminus, the 319-residue chain is Biotin synthase (319 aa).

In terms of domain architecture, Radical SAM core spans 44 to 273; sequence IHGDGIDLCS…EAKIRLAGGR (230 aa). [4Fe-4S] cluster is bound by residues C62, C66, and C69. S106, C138, C198, and R268 together coordinate [2Fe-2S] cluster.

It belongs to the radical SAM superfamily. Biotin synthase family. As to quaternary structure, homodimer. The cofactor is [4Fe-4S] cluster. [2Fe-2S] cluster is required as a cofactor.

It carries out the reaction (4R,5S)-dethiobiotin + (sulfur carrier)-SH + 2 reduced [2Fe-2S]-[ferredoxin] + 2 S-adenosyl-L-methionine = (sulfur carrier)-H + biotin + 2 5'-deoxyadenosine + 2 L-methionine + 2 oxidized [2Fe-2S]-[ferredoxin]. It participates in cofactor biosynthesis; biotin biosynthesis; biotin from 7,8-diaminononanoate: step 2/2. Its function is as follows. Catalyzes the conversion of dethiobiotin (DTB) to biotin by the insertion of a sulfur atom into dethiobiotin via a radical-based mechanism. In Clostridium perfringens (strain ATCC 13124 / DSM 756 / JCM 1290 / NCIMB 6125 / NCTC 8237 / Type A), this protein is Biotin synthase.